We begin with the raw amino-acid sequence, 555 residues long: Formate--tetrahydrofolate ligase (555 aa).

65–72 (TPAGEGKS) is a binding site for ATP.

This sequence belongs to the formate--tetrahydrofolate ligase family.

It catalyses the reaction (6S)-5,6,7,8-tetrahydrofolate + formate + ATP = (6R)-10-formyltetrahydrofolate + ADP + phosphate. It functions in the pathway one-carbon metabolism; tetrahydrofolate interconversion. This chain is Formate--tetrahydrofolate ligase, found in Staphylococcus aureus (strain NCTC 8325 / PS 47).